Here is a 469-residue protein sequence, read N- to C-terminus: Mitochondrial-processing peptidase subunit beta (469 aa).

H78 serves as a coordination point for Zn(2+). The active-site Proton acceptor is E81. The Zn(2+) site is built by H82 and E159.

It belongs to the peptidase M16 family. In terms of assembly, heterodimer of alpha and beta subunits, forming the mitochondrial processing protease (MPP) in which subunit alpha is involved in substrate recognition and binding and subunit beta is the catalytic subunit. mppB is probably also part of the cytochrome bc1 complex as a core I protein in the mitochondrial inner membrane. The cofactor is Zn(2+).

It localises to the mitochondrion inner membrane. It is found in the mitochondrion matrix. The enzyme catalyses Release of N-terminal transit peptides from precursor proteins imported into the mitochondrion, typically with Arg in position P2.. Its activity is regulated as follows. Binding to alpha subunit is required for catalytic activity. Functionally, catalytic subunit of the essential mitochondrial processing protease (MPP), which cleaves the mitochondrial sequence off newly imported precursors proteins. Preferentially, cleaves after an arginine at position P2. Plays an essential role in mitochondrial biogenesis. In Dictyostelium discoideum (Social amoeba), this protein is Mitochondrial-processing peptidase subunit beta (mppB).